The sequence spans 393 residues: Probable acetyl-CoA acetyltransferase (393 aa).

A propeptide (removed; alternate) is located at residue T2. C88 acts as the Acyl-thioester intermediate in catalysis. Active-site proton acceptor residues include H349 and C379.

The protein belongs to the thiolase-like superfamily. Thiolase family.

The catalysed reaction is 2 acetyl-CoA = acetoacetyl-CoA + CoA. This chain is Probable acetyl-CoA acetyltransferase (fadA4), found in Mycobacterium tuberculosis (strain ATCC 25618 / H37Rv).